The primary structure comprises 561 residues: uncharacterized protein (561 aa).

Residues 1-11 (MSQVSLPSQLK) are compositionally biased toward polar residues. 2 disordered regions span residues 1–22 (MSQVSLPSQLKETGPRLQSRCR) and 522–561 (CSLPQSSPDPVPDGSPRPKQQPQQAQAEQAQQPQQQIMLP). Residues 541 to 561 (QQPQQAQAEQAQQPQQQIMLP) are compositionally biased toward low complexity.

To Synechocystis PCC 6803 sll0335 and to M.tuberculosis Rv2567.

This is an uncharacterized protein from Mycobacterium leprae (strain TN).